Here is a 257-residue protein sequence, read N- to C-terminus: Zinc import ATP-binding protein ZnuC (257 aa).

Positions 5–220 (ITLKNVAVNF…PEFIAMFGHH (216 aa)) constitute an ABC transporter domain. 37–44 (GPNGAGKS) contacts ATP.

Belongs to the ABC transporter superfamily. Zinc importer (TC 3.A.1.15.5) family. In terms of assembly, the complex is composed of two ATP-binding proteins (ZnuC), two transmembrane proteins (ZnuB) and a solute-binding protein (ZnuA).

The protein localises to the cell inner membrane. It catalyses the reaction Zn(2+)(out) + ATP(in) + H2O(in) = Zn(2+)(in) + ADP(in) + phosphate(in) + H(+)(in). Functionally, part of the ABC transporter complex ZnuABC involved in zinc import. Responsible for energy coupling to the transport system. This chain is Zinc import ATP-binding protein ZnuC, found in Photorhabdus laumondii subsp. laumondii (strain DSM 15139 / CIP 105565 / TT01) (Photorhabdus luminescens subsp. laumondii).